Reading from the N-terminus, the 120-residue chain is Internal scaffolding protein B (120 aa).

Positions 1-23 (MEQLTKNQAVATSQEAFQNQNEP) are enriched in polar residues. The segment at 1–64 (MEQLTKNQAV…PDIEAERKKR (64 aa)) is disordered. Basic and acidic residues-rich tracts occupy residues 24-36 (QLRDENVHNDKSV) and 48-64 (LRRDAVQPDIEAERKKR).

It belongs to the microviridae B protein family. In terms of assembly, component of the procapsid complex composed of 60 copies of the internally located B, 240 copies of the external scaffolding protein D, 60 copies of each of the viral structural proteins F and G proteins, and 12 copies of H. The proteolytic cleavage of the internal scaffolding protein B releases the scaffold protein in order to continue virion assembly.

The protein resides in the host cytoplasm. Functionally, participates in the assembly of the viral procapsid in the cytoplasm. Forms first a 12S pre-assembly complex with protein H, and F and G pentamers, then twelve 12S complexes are joined by the D protein to form the procapsid. Internal scaffold protein B is released from the procapsid upon genome packaging. Autoproteolytic activity cleaves protein B and probably facilitates its removal through the pores of the procapsid. In Enterobacteria phage S13 (Bacteriophage S13), this protein is Internal scaffolding protein B (B).